The chain runs to 119 residues: Holo-[acyl-carrier-protein] synthase (119 aa).

Residues Asp-8 and Glu-59 each contribute to the Mg(2+) site.

Belongs to the P-Pant transferase superfamily. AcpS family. Mg(2+) serves as cofactor.

It is found in the cytoplasm. The catalysed reaction is apo-[ACP] + CoA = holo-[ACP] + adenosine 3',5'-bisphosphate + H(+). Functionally, transfers the 4'-phosphopantetheine moiety from coenzyme A to a Ser of acyl-carrier-protein. The chain is Holo-[acyl-carrier-protein] synthase from Lactococcus lactis subsp. lactis (strain IL1403) (Streptococcus lactis).